Reading from the N-terminus, the 321-residue chain is Tyrosine recombinase XerC (321 aa).

Residues 16–107 (SDIGQQIVRW…GLRSFARFLE (92 aa)) enclose the Core-binding (CB) domain. In terms of domain architecture, Tyr recombinase spans 128–315 (SVPKPIHMSA…DSERLLDVYR (188 aa)). Residues R173, K199, H267, R270, and H293 contribute to the active site. The O-(3'-phospho-DNA)-tyrosine intermediate role is filled by Y302.

The protein belongs to the 'phage' integrase family. XerC subfamily. As to quaternary structure, forms a cyclic heterotetrameric complex composed of two molecules of XerC and two molecules of XerD.

It localises to the cytoplasm. In terms of biological role, site-specific tyrosine recombinase, which acts by catalyzing the cutting and rejoining of the recombining DNA molecules. The XerC-XerD complex is essential to convert dimers of the bacterial chromosome into monomers to permit their segregation at cell division. It also contributes to the segregational stability of plasmids. The sequence is that of Tyrosine recombinase XerC from Nitrobacter winogradskyi (strain ATCC 25391 / DSM 10237 / CIP 104748 / NCIMB 11846 / Nb-255).